Reading from the N-terminus, the 254-residue chain is Phosphatidylglycerol--prolipoprotein diacylglyceryl transferase (254 aa).

4 consecutive transmembrane segments (helical) span residues 11 to 31, 49 to 69, 84 to 104, and 109 to 129; these read LAIR…LLLA, FLIA…IFEF, QGGL…YIYL, and ESFF…QAIG. Position 130 (Arg-130) interacts with a 1,2-diacyl-sn-glycero-3-phospho-(1'-sn-glycerol). The next 3 membrane-spanning stretches (helical) occupy residues 169-189, 196-216, and 228-248; these read PTFL…VYLL, GIVF…IEGL, and VAQL…YNII.

The protein belongs to the Lgt family.

The protein localises to the cell membrane. The catalysed reaction is L-cysteinyl-[prolipoprotein] + a 1,2-diacyl-sn-glycero-3-phospho-(1'-sn-glycerol) = an S-1,2-diacyl-sn-glyceryl-L-cysteinyl-[prolipoprotein] + sn-glycerol 1-phosphate + H(+). Its pathway is protein modification; lipoprotein biosynthesis (diacylglyceryl transfer). Catalyzes the transfer of the diacylglyceryl group from phosphatidylglycerol to the sulfhydryl group of the N-terminal cysteine of a prolipoprotein, the first step in the formation of mature lipoproteins. The sequence is that of Phosphatidylglycerol--prolipoprotein diacylglyceryl transferase from Clostridium botulinum (strain ATCC 19397 / Type A).